The chain runs to 376 residues: Alcohol dehydrogenase 1 (376 aa).

At Ser2 the chain carries N-acetylserine. Residues Cys47, His68, Cys98, Cys101, Cys104, Cys112, and Cys176 each contribute to the Zn(2+) site. NAD(+) is bound by residues 201 to 206 (GLGGVG), Asp225, and Lys230. Residue Lys235 is modified to N6-succinyllysine. 294 to 296 (VGV) contacts NAD(+). Position 341 is an N6-succinyllysine (Lys341). Position 371 (Arg371) interacts with NAD(+).

Belongs to the zinc-containing alcohol dehydrogenase family. Class-I subfamily. Dimer of identical or non-identical chains of three types (A, B, C), which are coded by 3 separate genes at different loci. The cofactor is Zn(2+).

The protein localises to the cytoplasm. The catalysed reaction is a primary alcohol + NAD(+) = an aldehyde + NADH + H(+). It catalyses the reaction a secondary alcohol + NAD(+) = a ketone + NADH + H(+). The polypeptide is Alcohol dehydrogenase 1 (Adh1) (Rattus norvegicus (Rat)).